Consider the following 313-residue polypeptide: Carbamate kinase 2 (313 aa).

Belongs to the carbamate kinase family.

It is found in the cytoplasm. The enzyme catalyses hydrogencarbonate + NH4(+) + ATP = carbamoyl phosphate + ADP + H2O + H(+). It participates in metabolic intermediate metabolism; carbamoyl phosphate degradation; CO(2) and NH(3) from carbamoyl phosphate: step 1/1. The sequence is that of Carbamate kinase 2 (arcC2) from Staphylococcus aureus (strain MRSA252).